The primary structure comprises 69 residues: UPF0434 protein Rmet_0534 (69 aa).

It belongs to the UPF0434 family.

The polypeptide is UPF0434 protein Rmet_0534 (Cupriavidus metallidurans (strain ATCC 43123 / DSM 2839 / NBRC 102507 / CH34) (Ralstonia metallidurans)).